Consider the following 405-residue polypeptide: SPbeta prophage-derived uncharacterized protein YonJ (405 aa).

Positions aspartate 72 to glutamate 101 form a coiled coil.

This is SPbeta prophage-derived uncharacterized protein YonJ (yonJ) from Bacillus subtilis (strain 168).